We begin with the raw amino-acid sequence, 485 residues long: Fumarate hydratase, mitochondrial (485 aa).

Residues 1-19 (MLSASRKLNNQQFLKTIRN) constitute a mitochondrion transit peptide. Residues 118 to 120 (SGT), 150 to 153 (HPND), 160 to 162 (SSN), and threonine 208 each bind substrate. Histidine 209 functions as the Proton donor/acceptor in the catalytic mechanism. The active site involves serine 339. Substrate-binding positions include serine 340 and 345–347 (KVN).

This sequence belongs to the class-II fumarase/aspartase family. Fumarase subfamily. As to quaternary structure, homotetramer.

The protein resides in the mitochondrion. Its subcellular location is the cytoplasm. The enzyme catalyses (S)-malate = fumarate + H2O. It functions in the pathway carbohydrate metabolism; tricarboxylic acid cycle; (S)-malate from fumarate: step 1/1. In terms of biological role, catalyzes the reversible stereospecific interconversion of fumarate to L-malate. Functionally, catalyzes the hydration of fumarate to L-malate in the tricarboxylic acid (TCA) cycle to facilitate a transition step in the production of energy in the form of NADH. The chain is Fumarate hydratase, mitochondrial from Dictyostelium discoideum (Social amoeba).